The primary structure comprises 159 residues: MKVLIGSDKSGFGLKEEVKAYLAGKGYEMTDCGTLDPEQPKPFFEAAPIAAQKIQSGEFERAILICGTGMGMAIVANKFEGVYAACCESTYAAEKCRAINDANILTMGGWIIAGILGCEMAETFLTTGFTENLEEWRQEFLKGAKQKVGAIEESIYRKG.

Cys66 (proton acceptor) is an active-site residue.

This sequence belongs to the LacAB/RpiB family.

It catalyses the reaction 4-deoxy-4-sulfo-D-erythrose = 4-deoxy-4-sulfo-D-erythrulose. Part of the sulfo-TK pathway, a D-sulfoquinovose degradation pathway that produces 2-hydroxyethane-1-sulfonate (isethionate). Catalyzes the isomerization of 4-deoxy-4-sulfo-D-erythrose (SE) to 4-deoxy-4-sulfo-D-erythrulose (SEu). The polypeptide is 4-deoxy-4-sulfo-D-erythrose isomerase (Clostridium sp. (strain MSTE9)).